The primary structure comprises 234 residues: Orotate phosphoribosyltransferase (234 aa).

Lys-30 contributes to the 5-phospho-alpha-D-ribose 1-diphosphate binding site. 38–39 (FF) contacts orotate. Residues 80–81 (YK), Arg-110, Lys-111, Lys-114, His-116, and 136–144 (DDVITAGTA) contribute to the 5-phospho-alpha-D-ribose 1-diphosphate site. Thr-140 and Arg-168 together coordinate orotate.

Belongs to the purine/pyrimidine phosphoribosyltransferase family. PyrE subfamily. As to quaternary structure, homodimer.

The catalysed reaction is orotidine 5'-phosphate + diphosphate = orotate + 5-phospho-alpha-D-ribose 1-diphosphate. It functions in the pathway pyrimidine metabolism; UMP biosynthesis via de novo pathway; UMP from orotate: step 1/2. Its function is as follows. Catalyzes the transfer of a ribosyl phosphate group from 5-phosphoribose 1-diphosphate to orotate, leading to the formation of orotidine monophosphate (OMP). In Metarhizium anisopliae (Entomophthora anisopliae), this protein is Orotate phosphoribosyltransferase (URA5).